The primary structure comprises 91 residues: Small ribosomal subunit protein uS15 (91 aa).

The protein belongs to the universal ribosomal protein uS15 family. In terms of assembly, part of the 30S ribosomal subunit. Forms a bridge to the 50S subunit in the 70S ribosome, contacting the 23S rRNA.

Functionally, one of the primary rRNA binding proteins, it binds directly to 16S rRNA where it helps nucleate assembly of the platform of the 30S subunit by binding and bridging several RNA helices of the 16S rRNA. Forms an intersubunit bridge (bridge B4) with the 23S rRNA of the 50S subunit in the ribosome. In Deinococcus radiodurans (strain ATCC 13939 / DSM 20539 / JCM 16871 / CCUG 27074 / LMG 4051 / NBRC 15346 / NCIMB 9279 / VKM B-1422 / R1), this protein is Small ribosomal subunit protein uS15.